The following is a 994-amino-acid chain: Sarcoplasmic/endoplasmic reticulum calcium ATPase 1 (994 aa).

Topologically, residues 1-48 (MEQAHTKTTEECLAYFGVNENTGLSLDQVKKNFDKFGPNELPAEEGKS) are cytoplasmic. Residues 49-69 (LWELVAEQFEDLLVRILLLAA) traverse the membrane as a helical segment. Residues 70 to 89 (IISFVLAWFEEGEETVTAFV) lie on the Lumenal side of the membrane. A helical membrane pass occupies residues 90-110 (EPFVILLILIANAVVGVWQER). Over 111 to 253 (NAEDAIEALK…QEKTPLQQKL (143 aa)) the chain is Cytoplasmic. A helical membrane pass occupies residues 254 to 273 (DEFGEQLSKVISLICVAVWL). Over 274-295 (INIGHFNDPIHGGSWIKGAIYY) the chain is Lumenal. A helical membrane pass occupies residues 296-313 (FKIAVALAVAAIPEGLPA). Ca(2+) contacts are provided by valine 304, alanine 305, isoleucine 307, and glutamate 309. The Cytoplasmic portion of the chain corresponds to 314–757 (VITTCLALGT…EEGRAIYNNM (444 aa)). The 4-aspartylphosphate intermediate role is filled by aspartate 351. The Mg(2+) site is built by aspartate 351 and threonine 353. ATP is bound by residues threonine 353, glutamate 442, arginine 489, lysine 515, arginine 560, threonine 625, glycine 626, aspartate 627, arginine 678, and lysine 684. Aspartate 703 is a Mg(2+) binding site. Residue asparagine 706 coordinates ATP. A helical membrane pass occupies residues 758–777 (KQFIRYLISSNVGEVVCIFL). Residues asparagine 768 and glutamate 771 each coordinate Ca(2+). Over 778–787 (TAALGLPEAL) the chain is Lumenal. A helical transmembrane segment spans residues 788–808 (IPVQLLWVNLVTDGLPATALG). Positions 788-808 (IPVQLLWVNLVTDGLPATALG) are interaction with PLN. 3 residues coordinate Ca(2+): asparagine 796, threonine 799, and aspartate 800. Residues 809–828 (FNPPDLDIMDRPPRSPKEPL) lie on the Cytoplasmic side of the membrane. A helical transmembrane segment spans residues 829-851 (ISGWLFFRYMAIGGYVGAATVGA). Topologically, residues 852–897 (AAWWFMYADDGPNVTFYQLSHFMQCTEDNPDFEGHECEIFESPVPM) are lumenal. Cysteine 876 and cysteine 888 are oxidised to a cystine. Residues 898–917 (TMALSVLVTIEMCNALNSLS) traverse the membrane as a helical segment. A Ca(2+)-binding site is contributed by glutamate 908. Over 918 to 930 (ENQSLIRMPPWSN) the chain is Cytoplasmic. A helical membrane pass occupies residues 931 to 949 (FWLLGSICLSMSLHFLILY). The tract at residues 932–943 (WLLGSICLSMSL) is interaction with PLN. The Lumenal portion of the chain corresponds to 950–964 (VEPLPMIFKLTPLNV). Residues 965-985 (EQWFIVLKMSFPVILLDELLK) traverse the membrane as a helical segment. At 986-994 (FVARNYLEG) the chain is on the cytoplasmic side.

It belongs to the cation transport ATPase (P-type) (TC 3.A.3) family. Type IIA subfamily. As to quaternary structure, interacts with sarcolipin (SLN). Interacts with phospholamban (PLN). Interacts with myoregulin (MRLN). Interacts with DWORF. Interacts with VMP1. The cofactor is Mg(2+).

The protein resides in the endoplasmic reticulum membrane. The protein localises to the sarcoplasmic reticulum membrane. It catalyses the reaction Ca(2+)(in) + ATP + H2O = Ca(2+)(out) + ADP + phosphate + H(+). Its activity is regulated as follows. Inhibited by sarcolipin (SLN) and myoregulin (MRLN). Also shown to be inhibited by phospholamban (PLN) in vitro. Enhanced by DWORF; DWORF increases activity by displacing sarcolipin (SLN), phospholamban (PLN) and myoregulin (MRLN). Key regulator of striated muscle performance by acting as the major Ca(2+) ATPase responsible for the reuptake of cytosolic Ca(2+) into the sarcoplasmic reticulum. Catalyzes the hydrolysis of ATP coupled with the translocation of calcium from the cytosol to the sarcoplasmic reticulum lumen. Contributes to calcium sequestration involved in muscular excitation/contraction. This Pelophylax lessonae (Pool frog) protein is Sarcoplasmic/endoplasmic reticulum calcium ATPase 1 (ATP2A1).